Reading from the N-terminus, the 735-residue chain is Transcription factor sphG (735 aa).

The zn(2)-C6 fungal-type DNA-binding region spans 13 to 40 (CDQCRARKIRCSREKPSCRNCGRLGLQC). A disordered region spans residues 89 to 110 (TISPSARCPASPASPSPRLSDK). Residues 91–106 (SPSARCPASPASPSPR) are compositionally biased toward low complexity.

The protein localises to the nucleus. Its function is as follows. Transcription factor that regulates the expression of the gene cluster that mediates the biosynthesis of sphingofungins, bioactive molecules acting as sphingolipid inhibitors via inhibiting serine palmitoyl transferase (SPT). This is Transcription factor sphG from Aspergillus fumigatus (strain CBS 144.89 / FGSC A1163 / CEA10) (Neosartorya fumigata).